Consider the following 323-residue polypeptide: tRNA dimethylallyltransferase (323 aa).

12–19 (GPTAAGKT) contributes to the ATP binding site. 14-19 (TAAGKT) contributes to the substrate binding site. Interaction with substrate tRNA regions lie at residues 37-40 (DSAL) and 161-165 (QRLMR).

Belongs to the IPP transferase family. In terms of assembly, monomer. Mg(2+) serves as cofactor.

It catalyses the reaction adenosine(37) in tRNA + dimethylallyl diphosphate = N(6)-dimethylallyladenosine(37) in tRNA + diphosphate. Catalyzes the transfer of a dimethylallyl group onto the adenine at position 37 in tRNAs that read codons beginning with uridine, leading to the formation of N6-(dimethylallyl)adenosine (i(6)A). This is tRNA dimethylallyltransferase from Pseudomonas aeruginosa (strain UCBPP-PA14).